Reading from the N-terminus, the 133-residue chain is Ribosome-binding factor A (133 aa).

The protein belongs to the RbfA family. Monomer. Binds 30S ribosomal subunits, but not 50S ribosomal subunits or 70S ribosomes.

The protein resides in the cytoplasm. One of several proteins that assist in the late maturation steps of the functional core of the 30S ribosomal subunit. Associates with free 30S ribosomal subunits (but not with 30S subunits that are part of 70S ribosomes or polysomes). Required for efficient processing of 16S rRNA. May interact with the 5'-terminal helix region of 16S rRNA. The polypeptide is Ribosome-binding factor A (Salmonella schwarzengrund (strain CVM19633)).